The sequence spans 496 residues: Probable cytosol aminopeptidase (496 aa).

Positions 266 and 271 each coordinate Mn(2+). Lys-278 is a catalytic residue. Residues Asp-289, Asp-348, and Glu-350 each contribute to the Mn(2+) site. Arg-352 is an active-site residue.

The protein belongs to the peptidase M17 family. Mn(2+) serves as cofactor.

The protein localises to the cytoplasm. It carries out the reaction Release of an N-terminal amino acid, Xaa-|-Yaa-, in which Xaa is preferably Leu, but may be other amino acids including Pro although not Arg or Lys, and Yaa may be Pro. Amino acid amides and methyl esters are also readily hydrolyzed, but rates on arylamides are exceedingly low.. The enzyme catalyses Release of an N-terminal amino acid, preferentially leucine, but not glutamic or aspartic acids.. Its function is as follows. Presumably involved in the processing and regular turnover of intracellular proteins. Catalyzes the removal of unsubstituted N-terminal amino acids from various peptides. The chain is Probable cytosol aminopeptidase from Pseudomonas fluorescens (strain SBW25).